Consider the following 259-residue polypeptide: 3-deoxy-manno-octulosonate cytidylyltransferase (259 aa).

This sequence belongs to the KdsB family.

It localises to the cytoplasm. The catalysed reaction is 3-deoxy-alpha-D-manno-oct-2-ulosonate + CTP = CMP-3-deoxy-beta-D-manno-octulosonate + diphosphate. It functions in the pathway nucleotide-sugar biosynthesis; CMP-3-deoxy-D-manno-octulosonate biosynthesis; CMP-3-deoxy-D-manno-octulosonate from 3-deoxy-D-manno-octulosonate and CTP: step 1/1. Its pathway is bacterial outer membrane biogenesis; lipopolysaccharide biosynthesis. Functionally, activates KDO (a required 8-carbon sugar) for incorporation into bacterial lipopolysaccharide in Gram-negative bacteria. The sequence is that of 3-deoxy-manno-octulosonate cytidylyltransferase from Xanthomonas oryzae pv. oryzae (strain KACC10331 / KXO85).